Reading from the N-terminus, the 439-residue chain is GTPase Der (439 aa).

EngA-type G domains are found at residues 4–168 and 177–352; these read PIVA…KDDE and INIA…DNYT. Residues 10-17, 57-61, 120-123, 183-190, 230-234, and 295-298 each bind GTP; these read GRPNVGKS, DTGGI, NKID, GKPNVGKS, DTAGL, and NKWD. Residues 353–437 enclose the KH-like domain; that stretch reads KRVKTGVLND…GIKLEFRERK (85 aa).

This sequence belongs to the TRAFAC class TrmE-Era-EngA-EngB-Septin-like GTPase superfamily. EngA (Der) GTPase family. As to quaternary structure, associates with the 50S ribosomal subunit.

GTPase that plays an essential role in the late steps of ribosome biogenesis. In Clostridium botulinum (strain Kyoto / Type A2), this protein is GTPase Der.